Consider the following 2009-residue polypeptide: Rootletin (2009 aa).

Coiled coils occupy residues 74–265 (EMAS…VTSD) and 346–438 (ASLH…LRLQ). Disordered regions lie at residues 462–519 (ALSD…CSDS), 575–594 (RDQTAASAQAQEDAQREAQR), 636–665 (ELKRQHNQLEDAQEDSVQEGARARRELERS), 1180–1225 (EAQR…ELRS), and 1448–1501 (GRVS…EAVR). A compositionally biased stretch (polar residues) spans 463-484 (LSDTESGVQLSSSERTADTSDG). Coiled coils occupy residues 550 to 1058 (LGSV…LLAE) and 1091 to 1439 (LEME…GLRS). The segment covering 577–586 (QTAASAQAQE) has biased composition (low complexity). Residues 656–665 (ARARRELERS) are compositionally biased toward basic and acidic residues. Serine 1453, serine 1463, and serine 1469 each carry phosphoserine. Position 1475 is a phosphotyrosine (tyrosine 1475). Phosphoserine occurs at positions 1476, 1479, 1483, 1489, and 1568. Positions 1479 to 1494 (SQPPSPGLIASPAPPD) are enriched in pro residues. Coiled coils occupy residues 1498–1697 (EAVR…GTLQ) and 1744–1998 (HLQK…RSSA). Residues 1957–2009 (QVQTERTLEARERAHRQRVSGLEEQVSTLKAQLHQELRRSSASVSLPPGTPEK) are disordered.

Belongs to the rootletin family. As to quaternary structure, homomer. Interacts with KLC3, NEK2 and the N-terminus of CEP250. Interacts with CEP44. Phosphorylated by NEK2 which may regulate its association with centrosomes. As to expression, highest expression detected in photoreceptor cells of retina. Expressed at lower levels in brain, trachea and kidney. Detected in all major ciliated epithelia. During embryonic development, enriched along the apical domains of neuroepithelium in brain ventricular zone, in primordia of retinal pigment epithelia and in neural retina.

The protein resides in the cytoplasm. It is found in the cytoskeleton. The protein localises to the microtubule organizing center. Its subcellular location is the centrosome. It localises to the centriole. The protein resides in the cilium basal body. Major structural component of the ciliary rootlet, a cytoskeletal-like structure in ciliated cells which originates from the basal body at the proximal end of a cilium and extends proximally toward the cell nucleus. Furthermore, is required for the correct positioning of the cilium basal body relative to the cell nucleus, to allow for ciliogenesis. Contributes to centrosome cohesion before mitosis. This is Rootletin from Mus musculus (Mouse).